A 591-amino-acid polypeptide reads, in one-letter code: V-type ATP synthase alpha chain (591 aa).

232–239 (GPFGAGKT) contributes to the ATP binding site.

Belongs to the ATPase alpha/beta chains family.

It carries out the reaction ATP + H2O + 4 H(+)(in) = ADP + phosphate + 5 H(+)(out). Its function is as follows. Produces ATP from ADP in the presence of a proton gradient across the membrane. The V-type alpha chain is a catalytic subunit. The polypeptide is V-type ATP synthase alpha chain (Nitrosococcus oceani (strain ATCC 19707 / BCRC 17464 / JCM 30415 / NCIMB 11848 / C-107)).